The primary structure comprises 112 residues: UPF0342 protein SPT_0901 (112 aa).

The protein belongs to the UPF0342 family.

This is UPF0342 protein SPT_0901 from Streptococcus pneumoniae (strain Taiwan19F-14).